A 264-amino-acid polypeptide reads, in one-letter code: Apolipoprotein A-I (264 aa).

The signal sequence occupies residues 1–18 (MKAVVLTVAVLFLTGSQA). 2 tandem repeats follow at residues 67–88 (LKLL…EQLG) and 89–110 (PVTQ…QEMN). Residues 67-264 (LKLLDNWDTL…DDAAKKLSSQ (198 aa)) form a 10 X approximate tandem repeats region. A Methionine sulfoxide modification is found at methionine 109. The stretch at 111–121 (KDLEEVKQKVQ) is one 3; half-length repeat. 3 consecutive repeat copies span residues 122–143 (PYLE…QKVE), 144–165 (PLST…EKLT), and 166–187 (PLGE…TQLA). The stretch at 188-207 (PYSDKMRERLAERLTALKDS) is one 7; truncated repeat. Methionine 193 is modified (methionine sulfoxide). Copy 8 of the repeat occupies 208–229 (ASFAEYHAKASEHLKTLREKAK). The stretch at 230–240 (PAIEDLGQGLL) is one 9; half-length repeat. The stretch at 241 to 264 (PVLENLKASFLSAIDDAAKKLSSQ) is repeat 10.

Belongs to the apolipoprotein A1/A4/E family. In terms of assembly, homodimer. Interacts with APOA1BP and CLU. Component of a sperm activating protein complex (SPAP), consisting of APOA1, an immunoglobulin heavy chain, an immunoglobulin light chain and albumin. Interacts with NDRG1. Interacts with SCGB3A2. Interacts with NAXE and YJEFN3. Glycosylated. Post-translationally, palmitoylated. In terms of processing, phosphorylation sites are present in the extracellular medium.

Its subcellular location is the secreted. Functionally, participates in the reverse transport of cholesterol from tissues to the liver for excretion by promoting cholesterol efflux from tissues and by acting as a cofactor for the lecithin cholesterol acyltransferase (LCAT). As part of the SPAP complex, activates spermatozoa motility. The chain is Apolipoprotein A-I (APOA1) from Castor canadensis (American beaver).